The following is a 386-amino-acid chain: Protein phosphatase methylesterase 1 (386 aa).

Residues Met1–Lys38 are disordered. Ser15 bears the Phosphoserine mark. Residue Arg16 is modified to Asymmetric dimethylarginine; alternate. The residue at position 16 (Arg16) is an Omega-N-methylarginine; alternate. Ser156 is an active-site residue. The segment covering Ile255–Ser265 has biased composition (acidic residues). Positions Ile255–Lys280 are disordered. The segment covering Val268–Lys280 has biased composition (basic and acidic residues). His349 is an active-site residue.

It belongs to the AB hydrolase superfamily. Binds PPP2CA and PPP2CB. In terms of processing, phosphorylated by SIK1 following increases in intracellular sodium, leading to dissociation from the protein phosphatase 2A (PP2A) complex and subsequent dephosphorylation of sodium/potassium-transporting ATPase ATP1A1.

It carries out the reaction [phosphatase 2A protein]-C-terminal L-leucine methyl ester + H2O = [phosphatase 2A protein]-C-terminal L-leucine + methanol + H(+). Its function is as follows. Demethylates proteins that have been reversibly carboxymethylated. Demethylates PPP2CB (in vitro) and PPP2CA. Binding to PPP2CA displaces the manganese ion and inactivates the enzyme. The chain is Protein phosphatase methylesterase 1 (Ppme1) from Rattus norvegicus (Rat).